Reading from the N-terminus, the 855-residue chain is Protein translocase subunit SecA (855 aa).

ATP-binding positions include Gln88, 106–110, and Asp509; that span reads GEGKT. Residues 815–837 form a disordered region; sequence EANLQNKFEKKPARNEPCPCGSG. Residues Cys832, Cys834, Cys843, and Cys844 each contribute to the Zn(2+) site.

It belongs to the SecA family. In terms of assembly, monomer and homodimer. Part of the essential Sec protein translocation apparatus which comprises SecA, SecYEG and auxiliary proteins SecDF-YajC and YidC. Requires Zn(2+) as cofactor.

It is found in the cell inner membrane. The protein resides in the cytoplasm. The enzyme catalyses ATP + H2O + cellular proteinSide 1 = ADP + phosphate + cellular proteinSide 2.. Its function is as follows. Part of the Sec protein translocase complex. Interacts with the SecYEG preprotein conducting channel. Has a central role in coupling the hydrolysis of ATP to the transfer of proteins into and across the cell membrane, serving as an ATP-driven molecular motor driving the stepwise translocation of polypeptide chains across the membrane. The sequence is that of Protein translocase subunit SecA from Campylobacter fetus subsp. fetus (strain 82-40).